A 303-amino-acid polypeptide reads, in one-letter code: Aspartate carbamoyltransferase catalytic subunit (303 aa).

The carbamoyl phosphate site is built by arginine 51 and threonine 52. Lysine 80 serves as a coordination point for L-aspartate. The carbamoyl phosphate site is built by arginine 101, histidine 129, and glutamine 132. Arginine 162 and arginine 221 together coordinate L-aspartate. Residues leucine 260 and proline 261 each contribute to the carbamoyl phosphate site.

Belongs to the aspartate/ornithine carbamoyltransferase superfamily. ATCase family. Heterooligomer of catalytic and regulatory chains.

It catalyses the reaction carbamoyl phosphate + L-aspartate = N-carbamoyl-L-aspartate + phosphate + H(+). Its pathway is pyrimidine metabolism; UMP biosynthesis via de novo pathway; (S)-dihydroorotate from bicarbonate: step 2/3. In terms of biological role, catalyzes the condensation of carbamoyl phosphate and aspartate to form carbamoyl aspartate and inorganic phosphate, the committed step in the de novo pyrimidine nucleotide biosynthesis pathway. The chain is Aspartate carbamoyltransferase catalytic subunit from Saccharolobus islandicus (strain M.16.4 / Kamchatka #3) (Sulfolobus islandicus).